A 264-amino-acid chain; its full sequence is S-adenosylmethionine decarboxylase proenzyme (264 aa).

Residue Ser112 is the Schiff-base intermediate with substrate; via pyruvic acid of the active site. At Ser112 the chain carries Pyruvic acid (Ser); by autocatalysis. Residue His117 is the Proton acceptor; for processing activity of the active site. Cys140 serves as the catalytic Proton donor; for catalytic activity.

The protein belongs to the prokaryotic AdoMetDC family. Type 2 subfamily. Heterooctamer of four alpha and four beta chains arranged as a tetramer of alpha/beta heterodimers. Pyruvate is required as a cofactor. In terms of processing, is synthesized initially as an inactive proenzyme. Formation of the active enzyme involves a self-maturation process in which the active site pyruvoyl group is generated from an internal serine residue via an autocatalytic post-translational modification. Two non-identical subunits are generated from the proenzyme in this reaction, and the pyruvate is formed at the N-terminus of the alpha chain, which is derived from the carboxyl end of the proenzyme. The post-translation cleavage follows an unusual pathway, termed non-hydrolytic serinolysis, in which the side chain hydroxyl group of the serine supplies its oxygen atom to form the C-terminus of the beta chain, while the remainder of the serine residue undergoes an oxidative deamination to produce ammonia and the pyruvoyl group blocking the N-terminus of the alpha chain.

It carries out the reaction S-adenosyl-L-methionine + H(+) = S-adenosyl 3-(methylsulfanyl)propylamine + CO2. It participates in amine and polyamine biosynthesis; S-adenosylmethioninamine biosynthesis; S-adenosylmethioninamine from S-adenosyl-L-methionine: step 1/1. Functionally, catalyzes the decarboxylation of S-adenosylmethionine to S-adenosylmethioninamine (dcAdoMet), the propylamine donor required for the synthesis of the polyamines spermine and spermidine from the diamine putrescine. The chain is S-adenosylmethionine decarboxylase proenzyme from Hamiltonella defensa subsp. Acyrthosiphon pisum (strain 5AT).